Consider the following 257-residue polypeptide: Type III pantothenate kinase (257 aa).

6–13 serves as a coordination point for ATP; it reads EQGNTNTL. Position 107–110 (107–110) interacts with substrate; the sequence is GADR. Residue Asp109 is the Proton acceptor of the active site. Asp129 provides a ligand contact to K(+). An ATP-binding site is contributed by Thr132. Thr184 contacts substrate.

This sequence belongs to the type III pantothenate kinase family. As to quaternary structure, homodimer. The cofactor is NH4(+). Requires K(+) as cofactor.

It localises to the cytoplasm. The enzyme catalyses (R)-pantothenate + ATP = (R)-4'-phosphopantothenate + ADP + H(+). It participates in cofactor biosynthesis; coenzyme A biosynthesis; CoA from (R)-pantothenate: step 1/5. Catalyzes the phosphorylation of pantothenate (Pan), the first step in CoA biosynthesis. This chain is Type III pantothenate kinase, found in Phenylobacterium zucineum (strain HLK1).